The sequence spans 249 residues: SRR1-like protein (249 aa).

Residues 1-40 form a disordered region; that stretch reads MAAAALEPWSAVAPRRRKRAAGRRPRPGEGPRAEPEADGE. Residues 14–25 are compositionally biased toward basic residues; the sequence is PRRRKRAAGRRP. Residues 26 to 40 are compositionally biased toward basic and acidic residues; that stretch reads RPGEGPRAEPEADGE.

The protein belongs to the SRR1 family.

Its subcellular location is the cytoplasm. Its function is as follows. Plays a role in the regulation of heme biosynthesis and in the regulation of the expression of core clock genes. The polypeptide is SRR1-like protein (Srrd) (Mus musculus (Mouse)).